Reading from the N-terminus, the 428-residue chain is E3 ubiquitin-protein ligase RNF128 (428 aa).

A signal peptide spans 1 to 38; it reads MGPPPGIGVYCRGGCGAARLLAWCFLLALSPHAPGSRG. N-linked (GlcNAc...) asparagine glycosylation is found at N48, N59, and N101. Positions 75–183 constitute a PA domain; it reads SPLEPVSGVL…LKGTKILQSI (109 aa). The helical transmembrane segment at 208-228 threads the bilayer; that stretch reads IFFVSVSFFIITAATVGYFIF. The segment at 277 to 318 adopts an RING-type; atypical zinc-finger fold; sequence CAVCIELYKPNDLVRILTCNHIFHKTCVDPWLLEHRTCPMCK. The segment covering 342-351 has biased composition (polar residues); the sequence is VSNEASNTAS. A disordered region spans residues 342 to 428; sequence VSNEASNTAS…QEAAVREIKS (87 aa).

In terms of processing, auto-ubiquitinated. Controls the development of T-cell clonal anergy by ubiquitination. In terms of tissue distribution, expressed in brain, kidney, heart, liver, ovary, testis and thymus. Expression increased as early as 4 hours by 5- to 7-fold in anergized cultures as compared to resting or activated cells.

Its subcellular location is the cytoplasm. It is found in the endomembrane system. The protein resides in the cytoskeleton. The protein localises to the perinuclear region. The enzyme catalyses S-ubiquitinyl-[E2 ubiquitin-conjugating enzyme]-L-cysteine + [acceptor protein]-L-lysine = [E2 ubiquitin-conjugating enzyme]-L-cysteine + N(6)-ubiquitinyl-[acceptor protein]-L-lysine.. The protein operates within protein modification; protein ubiquitination. Its function is as follows. E3 ubiquitin-protein ligase that catalyzes 'Lys-27', 'Lys-48'- or 'Lys-63'-linked polyubiquitin chains formation and plays a role in different biological processes such as modulation of immune response, cytoskeletal dynamics or protein homeostasis. Inhibits IL2 and IL4 transcription, thereby playing an important role in the induction of the anergic phenotype, a long-term stable state of T-lymphocyte unresponsiveness to antigenic stimulation associated with the blockade of interleukin production. Ubiquitinates ARPC5 with 'Lys-48' linkages and COR1A with 'Lys-63' linkages leading to their degradation, down-regulation of these cytoskeletal components results in impaired lamellipodium formation and reduced accumulation of F-actin at the immunological synapse. Functions in the patterning of the dorsal ectoderm; sensitizes ectoderm to respond to neural-inducing signals. Plays a positive role in innate immune response by promoting 'Lys-63'-linked ubiquitination of TBK1 after RNA- or DNA-virus infection. Regulates alveolar macrophage activation and neutrophil infiltration by interacting with TLR4, targeting it for degradation, and inhibiting NF-kappa-B activation, hence decreasing pro-inflammatory cytokines. Negatively regulates the IL-3/STAT5 signaling pathway by facilitating 'Lys-27'-linked polyubiquitination of IL3RA leading to its degradation via lysosomal pathway. Directly regulates the N-glycosylation process in the endoplasmic reticulum by targeting the glycosyl-transferase RPN1 for ubiquitination and degradation. Other substrates targeted for degradation by RNF128 include transmembrane proteins CD40L, CD83 or the tetraspanin CD151. This is E3 ubiquitin-protein ligase RNF128 (Rnf128) from Mus musculus (Mouse).